Here is a 463-residue protein sequence, read N- to C-terminus: Putative dipeptidase YtjP (463 aa).

A Zn(2+)-binding site is contributed by His-85. Asp-87 is a catalytic residue. Asp-116 contacts Zn(2+). Glu-150 serves as the catalytic Proton acceptor. The Zn(2+) site is built by Glu-151, Asp-174, and His-436.

The protein belongs to the peptidase M20A family. It depends on Zn(2+) as a cofactor.

This chain is Putative dipeptidase YtjP (ytjP), found in Bacillus subtilis (strain 168).